The primary structure comprises 362 residues: tRNA/tmRNA (uracil-C(5))-methyltransferase (362 aa).

S-adenosyl-L-methionine contacts are provided by glutamine 182, tyrosine 210, asparagine 215, glutamate 231, and aspartate 293. The active-site Nucleophile is the cysteine 318. Catalysis depends on glutamate 352, which acts as the Proton acceptor.

Belongs to the class I-like SAM-binding methyltransferase superfamily. RNA M5U methyltransferase family. TrmA subfamily.

The enzyme catalyses uridine(54) in tRNA + S-adenosyl-L-methionine = 5-methyluridine(54) in tRNA + S-adenosyl-L-homocysteine + H(+). The catalysed reaction is uridine(341) in tmRNA + S-adenosyl-L-methionine = 5-methyluridine(341) in tmRNA + S-adenosyl-L-homocysteine + H(+). Its function is as follows. Dual-specificity methyltransferase that catalyzes the formation of 5-methyluridine at position 54 (m5U54) in all tRNAs, and that of position 341 (m5U341) in tmRNA (transfer-mRNA). This chain is tRNA/tmRNA (uracil-C(5))-methyltransferase, found in Neisseria meningitidis serogroup B (strain ATCC BAA-335 / MC58).